The primary structure comprises 254 residues: Adenosylcobinamide-GDP ribazoletransferase (254 aa).

7 consecutive transmembrane segments (helical) span residues 29-49 (LFWF…LGYF), 50-70 (TSLL…GIAL), 98-118 (IMKD…MMLL), 121-141 (IAIL…GVLL), 170-190 (AGVV…FPLL), 198-218 (LYAV…TGLL), and 230-250 (VLGA…ALSA).

Belongs to the CobS family. Requires Mg(2+) as cofactor.

The protein localises to the cell inner membrane. The catalysed reaction is alpha-ribazole + adenosylcob(III)inamide-GDP = adenosylcob(III)alamin + GMP + H(+). The enzyme catalyses alpha-ribazole 5'-phosphate + adenosylcob(III)inamide-GDP = adenosylcob(III)alamin 5'-phosphate + GMP + H(+). It participates in cofactor biosynthesis; adenosylcobalamin biosynthesis; adenosylcobalamin from cob(II)yrinate a,c-diamide: step 7/7. Joins adenosylcobinamide-GDP and alpha-ribazole to generate adenosylcobalamin (Ado-cobalamin). Also synthesizes adenosylcobalamin 5'-phosphate from adenosylcobinamide-GDP and alpha-ribazole 5'-phosphate. This Pelodictyon phaeoclathratiforme (strain DSM 5477 / BU-1) protein is Adenosylcobinamide-GDP ribazoletransferase.